The primary structure comprises 394 residues: [Pyruvate dehydrogenase (acetyl-transferring)] kinase 1, mitochondrial (394 aa).

The transit peptide at 1-20 (MWKIMRSWKCGGMRWAHRQR) directs the protein to the mitochondrion. The region spanning 126-386 (AYPYELHNPP…DVYIKLKGPS (261 aa)) is the Histidine kinase domain. The residue at position 148 (histidine 148) is a Phosphohistidine; by autocatalysis. ATP-binding positions include 267–274 (EVFKNAFE), aspartate 304, 323–324 (ST), and 347–352 (GMGFGL).

The protein belongs to the PDK/BCKDK protein kinase family. In terms of assembly, interacts with PKP2.

The protein resides in the mitochondrion matrix. It catalyses the reaction L-seryl-[pyruvate dehydrogenase E1 alpha subunit] + ATP = O-phospho-L-seryl-[pyruvate dehydrogenase E1 alpha subunit] + ADP + H(+). Functionally, inhibits the mitochondrial pyruvate dehydrogenase complex by phosphorylation of the E1 alpha subunit (PDA1), thus contributing to the regulation of glucose metabolism. Also involved in telomere maintenance. In Saccharomyces cerevisiae (strain ATCC 204508 / S288c) (Baker's yeast), this protein is [Pyruvate dehydrogenase (acetyl-transferring)] kinase 1, mitochondrial.